We begin with the raw amino-acid sequence, 291 residues long: Protein/nucleic acid deglycase HchA (291 aa).

The segment covering 1-18 (MSNERDTSRTPTPDHAEH) has biased composition (basic and acidic residues). The interval 1–24 (MSNERDTSRTPTPDHAEHNAFFPS) is disordered. Residue Cys188 is the Nucleophile of the active site.

The protein belongs to the peptidase C56 family. HchA subfamily.

It localises to the cytoplasm. It catalyses the reaction N(omega)-(1-hydroxy-2-oxopropyl)-L-arginyl-[protein] + H2O = lactate + L-arginyl-[protein] + H(+). The enzyme catalyses N(6)-(1-hydroxy-2-oxopropyl)-L-lysyl-[protein] + H2O = lactate + L-lysyl-[protein] + H(+). It carries out the reaction S-(1-hydroxy-2-oxopropyl)-L-cysteinyl-[protein] + H2O = lactate + L-cysteinyl-[protein] + H(+). The catalysed reaction is N(omega)-(1-hydroxy-2-oxoethyl)-L-arginyl-[protein] + H2O = L-arginyl-[protein] + glycolate + H(+). It catalyses the reaction N(6)-(1-hydroxy-2-oxoethyl)-L-lysyl-[protein] + H2O = glycolate + L-lysyl-[protein] + H(+). The enzyme catalyses S-(1-hydroxy-2-oxoethyl)-L-cysteinyl-[protein] + H2O = glycolate + L-cysteinyl-[protein] + H(+). It carries out the reaction N(2)-(1-hydroxy-2-oxopropyl)-dGTP + H2O = lactate + dGTP + H(+). The catalysed reaction is N(2)-(1-hydroxy-2-oxopropyl)-GTP + H2O = lactate + GTP + H(+). It catalyses the reaction N(2)-(1-hydroxy-2-oxopropyl)-GDP + H2O = lactate + GDP + H(+). The enzyme catalyses N(2)-(1-hydroxy-2-oxopropyl)-GMP + H2O = lactate + GMP + H(+). It carries out the reaction N(2)-(1-hydroxy-2-oxoethyl)-dGTP + H2O = dGTP + glycolate + H(+). The catalysed reaction is N(2)-(1-hydroxy-2-oxoethyl)-GTP + H2O = glycolate + GTP + H(+). It catalyses the reaction N(2)-(1-hydroxy-2-oxoethyl)-GDP + H2O = glycolate + GDP + H(+). The enzyme catalyses N(2)-(1-hydroxy-2-oxoethyl)-GMP + H2O = glycolate + GMP + H(+). It carries out the reaction an N(2)-(1-hydroxy-2-oxopropyl)-guanosine in RNA + H2O = a guanosine in RNA + lactate + H(+). The catalysed reaction is an N(2)-(1-hydroxy-2-oxopropyl)-2'-deoxyguanosine in DNA + H2O = a 2'-deoxyguanosine in DNA + lactate + H(+). It catalyses the reaction an N(2)-(1-hydroxy-2-oxoethyl)-guanosine in RNA + H2O = a guanosine in RNA + glycolate + H(+). The enzyme catalyses an N(2)-(1-hydroxy-2-oxoethyl)-2'-deoxyguanosine in DNA + H2O = a 2'-deoxyguanosine in DNA + glycolate + H(+). Functionally, protein and nucleotide deglycase that catalyzes the deglycation of the Maillard adducts formed between amino groups of proteins or nucleotides and reactive carbonyl groups of glyoxals. Thus, functions as a protein deglycase that repairs methylglyoxal- and glyoxal-glycated proteins, and releases repaired proteins and lactate or glycolate, respectively. Deglycates cysteine, arginine and lysine residues in proteins, and thus reactivates these proteins by reversing glycation by glyoxals. Acts on early glycation intermediates (hemithioacetals and aminocarbinols), preventing the formation of Schiff bases and advanced glycation endproducts (AGE). Also functions as a nucleotide deglycase able to repair glycated guanine in the free nucleotide pool (GTP, GDP, GMP, dGTP) and in DNA and RNA. Is thus involved in a major nucleotide repair system named guanine glycation repair (GG repair), dedicated to reversing methylglyoxal and glyoxal damage via nucleotide sanitization and direct nucleic acid repair. Plays an important role in protecting cells from carbonyl stress. The polypeptide is Protein/nucleic acid deglycase HchA (Pseudomonas aeruginosa (strain UCBPP-PA14)).